Reading from the N-terminus, the 404-residue chain is Phosphopentomutase (404 aa).

Residues Asp-10, Asp-303, His-308, Asp-344, His-345, and His-356 each coordinate Mn(2+).

It belongs to the phosphopentomutase family. Requires Mn(2+) as cofactor.

It localises to the cytoplasm. The enzyme catalyses 2-deoxy-alpha-D-ribose 1-phosphate = 2-deoxy-D-ribose 5-phosphate. It catalyses the reaction alpha-D-ribose 1-phosphate = D-ribose 5-phosphate. The protein operates within carbohydrate degradation; 2-deoxy-D-ribose 1-phosphate degradation; D-glyceraldehyde 3-phosphate and acetaldehyde from 2-deoxy-alpha-D-ribose 1-phosphate: step 1/2. Functionally, isomerase that catalyzes the conversion of deoxy-ribose 1-phosphate (dRib-1-P) and ribose 1-phosphate (Rib-1-P) to deoxy-ribose 5-phosphate (dRib-5-P) and ribose 5-phosphate (Rib-5-P), respectively. This Shewanella sp. (strain ANA-3) protein is Phosphopentomutase.